The primary structure comprises 436 residues: Enolase (436 aa).

Positions 159 and 168 each coordinate substrate. The active-site Proton donor is Glu211. 3 residues coordinate Mg(2+): Asp246, Glu295, and Asp320. Glu295 and Asp320 together coordinate substrate. Lys345 acts as the Proton acceptor in catalysis. Substrate is bound by residues 372-375 (SHRS) and Lys396.

It belongs to the enolase family. Homodimer. The cofactor is Mg(2+).

It is found in the cytoplasm. The enzyme catalyses (2R)-2-phosphoglycerate = phosphoenolpyruvate + H2O. It functions in the pathway carbohydrate degradation; glycolysis; pyruvate from D-glyceraldehyde 3-phosphate: step 4/5. The polypeptide is Enolase (Cunninghamella elegans).